The chain runs to 226 residues: Probable transaldolase (226 aa).

The active-site Schiff-base intermediate with substrate is the Lys-91.

The protein belongs to the transaldolase family. Type 3B subfamily.

It is found in the cytoplasm. The enzyme catalyses D-sedoheptulose 7-phosphate + D-glyceraldehyde 3-phosphate = D-erythrose 4-phosphate + beta-D-fructose 6-phosphate. It functions in the pathway carbohydrate degradation; pentose phosphate pathway; D-glyceraldehyde 3-phosphate and beta-D-fructose 6-phosphate from D-ribose 5-phosphate and D-xylulose 5-phosphate (non-oxidative stage): step 2/3. Its function is as follows. Transaldolase is important for the balance of metabolites in the pentose-phosphate pathway. The polypeptide is Probable transaldolase (Chlorobium phaeobacteroides (strain DSM 266 / SMG 266 / 2430)).